Consider the following 92-residue polypeptide: Small ribosomal subunit protein bS16 (92 aa).

The protein belongs to the bacterial ribosomal protein bS16 family.

This Staphylococcus carnosus (strain TM300) protein is Small ribosomal subunit protein bS16.